Reading from the N-terminus, the 611-residue chain is MTQPQMAPICLVENHNEQLSVNQEAIEILDKISQPVVVVAIVGLYRTGKSYLMNCLAGQNHGFPLGSTVQSQTKGIWMWCMPHPTKPEHTLVLLDTEGLGDVEKGDPKNDLWIFALSVLLSSTFIYNSMITINHQALEQLQYVTELTELIRAKSSPNPAGIKNSTEFVSFFPDFVWTVRDFMLELKLNGEDITSDDYLENALKLIPGDKPRMQASNSCRECIRLFFPNRKCFVFDRPTHDKELLQKLDSITEDQLDPKFQEVTKAFVSYIFTYAKIKTLKEGIKVTGNRLGILVTTYVNAINSGAVPCLDDAVTTLAQRENSVAVQKAADHYSEQMAQRLRLPTETLQELLDVHAACEKEAMAVFMEHSFKDENQQFLKKLVELIGENKELFLSKNEEASNKYCQEELDRLSKDFMENISTFFVPCGHKLYMDKREKIEHDYWQVPRKGVKASEVFQSFLQSQAFIESSILQADTALTAGEKAIAEERAQKVAAEKEQELLRQKQKEQQEYMEAQEKSHKENLEQLRRKLEQEREQDIKDHDMMLKKLMKDQKAFLEEGFKKKAEEMNKEIQQLRDVIKDKKRNTDRIKEALLNGFSTVLFHYLVRYLKHL.

The interval 1-308 is GTPase domain (Globular); it reads MTQPQMAPIC…NAINSGAVPC (308 aa). Residues 33 to 275 enclose the GB1/RHD3-type G domain; that stretch reads SQPVVVVAIV…FVSYIFTYAK (243 aa). Residues 43 to 50, 65 to 67, and 95 to 99 contribute to the GTP site; these read GLYRTGKS, LGS, and DTEGL.

This sequence belongs to the TRAFAC class dynamin-like GTPase superfamily. GB1/RHD3 GTPase family. GB1 subfamily.

The protein localises to the cytoplasmic vesicle. It catalyses the reaction GTP + H2O = GDP + phosphate + H(+). Interferon (IFN)-inducible GTPase that plays important roles in innate immunity against a diverse range of bacterial, viral and protozoan pathogens, such as bacterial pathogens Listeria monocytogenes and Mycobacterium bovis BCG as well as the protozoan pathogen Toxoplasma gondii. Confers protection to several pathogens, including the bacterial pathogens Listeria monocytogenes and Mycobacterium bovis BCG as well as the protozoan pathogen Toxoplasma gondii. This is Guanylate-binding protein 6 (Gbp6) from Mus musculus (Mouse).